The chain runs to 274 residues: Large ribosomal subunit protein uL2 (274 aa).

Positions 223-258 are disordered; that stretch reads VAMNPVDHPHGGGEGRTSGGRHPVTPWGIPTKGYKT.

Belongs to the universal ribosomal protein uL2 family. As to quaternary structure, part of the 50S ribosomal subunit. Forms a bridge to the 30S subunit in the 70S ribosome.

One of the primary rRNA binding proteins. Required for association of the 30S and 50S subunits to form the 70S ribosome, for tRNA binding and peptide bond formation. It has been suggested to have peptidyltransferase activity; this is somewhat controversial. Makes several contacts with the 16S rRNA in the 70S ribosome. This is Large ribosomal subunit protein uL2 from Pelobacter propionicus (strain DSM 2379 / NBRC 103807 / OttBd1).